Here is a 321-residue protein sequence, read N- to C-terminus: MKIATFSVLLLLLFIFPVALAQLKFKFYSESCPNAETIVENLVRQQFARDPSITAALTRMHFHDCFVQGCDASLLIDPTTSQLSEKNAGPNFSVRGFELIDEIKTALEAQCPSTVSCSDIVTLATRDAVFLGGGPSYVVPTGRRDGFVSNPEDANEILPPPFISVEGMLSFFGNKGMNVFDSVALLGAHTVGIASCGNFVDRVTNFQGTGLPDPSMDPTLAGRLRNTCAVPGGFAALDQSMPVTPVSFDNLFFGQIRERKGILLIDQLIASDPATSGVVLQYASNNELFKRQFAIAMVKMGAVDVLTGSAGEIRTNCRAFN.

An N-terminal signal peptide occupies residues 1–21; sequence MKIATFSVLLLLLFIFPVALA. 4 cysteine pairs are disulfide-bonded: cysteine 32–cysteine 111, cysteine 65–cysteine 70, cysteine 117–cysteine 317, and cysteine 196–cysteine 228. Histidine 63 serves as the catalytic Proton acceptor. 5 residues coordinate Ca(2+): aspartate 64, valine 67, glycine 69, aspartate 71, and serine 73. Position 159 (proline 159) interacts with substrate. Histidine 189 is a heme b binding site. Residue threonine 190 coordinates Ca(2+). Ca(2+) contacts are provided by aspartate 238, threonine 244, and aspartate 249.

This sequence belongs to the peroxidase family. Classical plant (class III) peroxidase subfamily. Requires heme b as cofactor. Ca(2+) is required as a cofactor.

The protein localises to the secreted. It carries out the reaction 2 a phenolic donor + H2O2 = 2 a phenolic radical donor + 2 H2O. In terms of biological role, removal of H(2)O(2), oxidation of toxic reductants, biosynthesis and degradation of lignin, suberization, auxin catabolism, response to environmental stresses such as wounding, pathogen attack and oxidative stress. These functions might be dependent on each isozyme/isoform in each plant tissue. The sequence is that of Peroxidase 28 (PER28) from Arabidopsis thaliana (Mouse-ear cress).